A 561-amino-acid polypeptide reads, in one-letter code: Corneodesmosin (561 aa).

The signal sequence occupies residues 1-32; sequence MGSSRAPRMGSVGGHGLMALLMAGLILPGILA. Disordered regions lie at residues 41–275, 415–466, and 536–561; these read PCKD…HTVS, GSVS…SSSL, and PLGP…LEKS. Positions 61–99 are enriched in low complexity; the sequence is GSNSISSQGGSSSFSSQGGSSSFSSHGGSSSSQGSSSGS. A compositionally biased stretch (gly residues) spans 116 to 127; that stretch reads GSGGSRPGGSGS. Low complexity-rich tracts occupy residues 128-207 and 224-248; these read QSGS…SSGS and TSGM…PCSS. The segment covering 415–430 has biased composition (polar residues); it reads GSVSSKGPCSGTRIQI. Residues 431 to 466 are compositionally biased toward low complexity; it reads TSSSSSTSYHPCSGGPSQGPCSSPGTGSISGGSSSL.

Its subcellular location is the secreted. Functionally, important for the epidermal barrier integrity. This is Corneodesmosin (Cdsn) from Mus musculus (Mouse).